Reading from the N-terminus, the 511-residue chain is Histidine ammonia-lyase (511 aa).

The segment at residues 142 to 144 (ASG) is a cross-link (5-imidazolinone (Ala-Gly)). Residue S143 is modified to 2,3-didehydroalanine (Ser).

Belongs to the PAL/histidase family. In terms of processing, contains an active site 4-methylidene-imidazol-5-one (MIO), which is formed autocatalytically by cyclization and dehydration of residues Ala-Ser-Gly.

It is found in the cytoplasm. It carries out the reaction L-histidine = trans-urocanate + NH4(+). The protein operates within amino-acid degradation; L-histidine degradation into L-glutamate; N-formimidoyl-L-glutamate from L-histidine: step 1/3. In Phenylobacterium zucineum (strain HLK1), this protein is Histidine ammonia-lyase.